The sequence spans 173 residues: T-complex protein 1 subunit alpha (173 aa).

The protein belongs to the TCP-1 chaperonin family. In terms of assembly, component of the chaperonin-containing T-complex (TRiC), a heterooligomeric complex of about 850 to 900 kDa that forms two stacked rings, 12 to 16 nm in diameter.

It localises to the cytoplasm. The protein localises to the cytosol. In terms of biological role, component of the chaperonin-containing T-complex (TRiC), a molecular chaperone complex that assists the folding of proteins upon ATP hydrolysis. The chain is T-complex protein 1 subunit alpha from Ambystoma mexicanum (Axolotl).